A 467-amino-acid chain; its full sequence is Xanthan biosynthesis protein XanB (467 aa).

It belongs to the mannose-6-phosphate isomerase type 2 family.

The catalysed reaction is D-mannose 6-phosphate = D-fructose 6-phosphate. It catalyses the reaction alpha-D-mannose 1-phosphate + GTP + H(+) = GDP-alpha-D-mannose + diphosphate. Its pathway is nucleotide-sugar biosynthesis; GDP-alpha-D-mannose biosynthesis; GDP-alpha-D-mannose from alpha-D-mannose 1-phosphate (GTP route): step 1/1. It participates in nucleotide-sugar biosynthesis; GDP-alpha-D-mannose biosynthesis; alpha-D-mannose 1-phosphate from D-fructose 6-phosphate: step 1/2. Its function is as follows. Involved in xanthan production. The chain is Xanthan biosynthesis protein XanB (xanB) from Xanthomonas campestris pv. campestris (strain B100).